Here is a 277-residue protein sequence, read N- to C-terminus: NADPH-dependent 7-cyano-7-deazaguanine reductase (277 aa).

86–88 (IES) is a binding site for substrate. An NADPH-binding site is contributed by 88-89 (SK). Catalysis depends on Cys185, which acts as the Thioimide intermediate. Asp192 functions as the Proton donor in the catalytic mechanism. 224–225 (HE) serves as a coordination point for substrate. 253–254 (RG) is an NADPH binding site.

This sequence belongs to the GTP cyclohydrolase I family. QueF type 2 subfamily. As to quaternary structure, homodimer.

It localises to the cytoplasm. It catalyses the reaction 7-aminomethyl-7-carbaguanine + 2 NADP(+) = 7-cyano-7-deazaguanine + 2 NADPH + 3 H(+). The protein operates within tRNA modification; tRNA-queuosine biosynthesis. Its function is as follows. Catalyzes the NADPH-dependent reduction of 7-cyano-7-deazaguanine (preQ0) to 7-aminomethyl-7-deazaguanine (preQ1). The sequence is that of NADPH-dependent 7-cyano-7-deazaguanine reductase from Hydrogenovibrio crunogenus (strain DSM 25203 / XCL-2) (Thiomicrospira crunogena).